A 105-amino-acid polypeptide reads, in one-letter code: UPF0235 protein RF_1332 (105 aa).

It belongs to the UPF0235 family.

The chain is UPF0235 protein RF_1332 from Rickettsia felis (strain ATCC VR-1525 / URRWXCal2) (Rickettsia azadi).